The primary structure comprises 119 residues: Large ribosomal subunit protein bL20 (119 aa).

Belongs to the bacterial ribosomal protein bL20 family.

Binds directly to 23S ribosomal RNA and is necessary for the in vitro assembly process of the 50S ribosomal subunit. It is not involved in the protein synthesizing functions of that subunit. The sequence is that of Large ribosomal subunit protein bL20 from Bradyrhizobium diazoefficiens (strain JCM 10833 / BCRC 13528 / IAM 13628 / NBRC 14792 / USDA 110).